We begin with the raw amino-acid sequence, 236 residues long: Leucyl/phenylalanyl-tRNA--protein transferase (236 aa).

This sequence belongs to the L/F-transferase family.

It is found in the cytoplasm. The enzyme catalyses N-terminal L-lysyl-[protein] + L-leucyl-tRNA(Leu) = N-terminal L-leucyl-L-lysyl-[protein] + tRNA(Leu) + H(+). The catalysed reaction is N-terminal L-arginyl-[protein] + L-leucyl-tRNA(Leu) = N-terminal L-leucyl-L-arginyl-[protein] + tRNA(Leu) + H(+). It carries out the reaction L-phenylalanyl-tRNA(Phe) + an N-terminal L-alpha-aminoacyl-[protein] = an N-terminal L-phenylalanyl-L-alpha-aminoacyl-[protein] + tRNA(Phe). Functions in the N-end rule pathway of protein degradation where it conjugates Leu, Phe and, less efficiently, Met from aminoacyl-tRNAs to the N-termini of proteins containing an N-terminal arginine or lysine. In Yersinia pseudotuberculosis serotype O:1b (strain IP 31758), this protein is Leucyl/phenylalanyl-tRNA--protein transferase.